Consider the following 462-residue polypeptide: UDP-N-acetylmuramoylalanine--D-glutamate ligase (462 aa).

Residue 120 to 126 (GTNGKTT) participates in ATP binding.

It belongs to the MurCDEF family.

It localises to the cytoplasm. The enzyme catalyses UDP-N-acetyl-alpha-D-muramoyl-L-alanine + D-glutamate + ATP = UDP-N-acetyl-alpha-D-muramoyl-L-alanyl-D-glutamate + ADP + phosphate + H(+). It participates in cell wall biogenesis; peptidoglycan biosynthesis. Functionally, cell wall formation. Catalyzes the addition of glutamate to the nucleotide precursor UDP-N-acetylmuramoyl-L-alanine (UMA). The chain is UDP-N-acetylmuramoylalanine--D-glutamate ligase from Bdellovibrio bacteriovorus (strain ATCC 15356 / DSM 50701 / NCIMB 9529 / HD100).